Consider the following 553-residue polypeptide: Phospholipase-B 81 (553 aa).

The signal sequence occupies residues 1–35 (MVRFGSAASSDNRRRRCWSWYWGGLLLLWAVAETR). 4 N-linked (GlcNAc...) asparagine glycosylation sites follow: asparagine 69, asparagine 313, asparagine 416, and asparagine 531.

It belongs to the phospholipase B-like family. In terms of tissue distribution, expressed by the venom gland.

It is found in the secreted. Its function is as follows. May cause hemolysis. This chain is Phospholipase-B 81, found in Drysdalia coronoides (White-lipped snake).